We begin with the raw amino-acid sequence, 505 residues long: Apolipoprotein N-acyltransferase (505 aa).

Helical transmembrane passes span 6–26, 29–49, 53–73, 80–100, 119–139, 152–172, and 189–209; these read PSILVACILSFCLGAIGCLAF, FDIWLIAYLSAAGLIWAATLV, TAMLATFAWSIGYFGVGVQWV, FGGVPVIVSYLAVLLLASYLG, FVLASLFTFTEYLRGVVFTGF, PFAQLAPIFGVEGLTFLVILL, and TFTKIAVIIGFSLASNLLQFV. In terms of domain architecture, CN hydrolase spans 223 to 469; sequence IQANIEQQLK…TNTLTAEIAT (247 aa). The active-site Proton acceptor is the Glu-263. Residue Lys-328 is part of the active site. The active-site Nucleophile is the Cys-379. The helical transmembrane segment at 475–495 threads the bilayer; the sequence is LFGQFGHWLIYSLSFICVAFG.

This sequence belongs to the CN hydrolase family. Apolipoprotein N-acyltransferase subfamily.

Its subcellular location is the cell inner membrane. The catalysed reaction is N-terminal S-1,2-diacyl-sn-glyceryl-L-cysteinyl-[lipoprotein] + a glycerophospholipid = N-acyl-S-1,2-diacyl-sn-glyceryl-L-cysteinyl-[lipoprotein] + a 2-acyl-sn-glycero-3-phospholipid + H(+). The protein operates within protein modification; lipoprotein biosynthesis (N-acyl transfer). In terms of biological role, catalyzes the phospholipid dependent N-acylation of the N-terminal cysteine of apolipoprotein, the last step in lipoprotein maturation. This is Apolipoprotein N-acyltransferase from Haemophilus ducreyi (strain 35000HP / ATCC 700724).